A 159-amino-acid chain; its full sequence is Cyclic pyranopterin monophosphate synthase (159 aa).

Substrate is bound by residues L75–H77 and M113–E114. Residue D128 is part of the active site.

Belongs to the MoaC family. Homohexamer; trimer of dimers.

The enzyme catalyses (8S)-3',8-cyclo-7,8-dihydroguanosine 5'-triphosphate = cyclic pyranopterin phosphate + diphosphate. It functions in the pathway cofactor biosynthesis; molybdopterin biosynthesis. In terms of biological role, catalyzes the conversion of (8S)-3',8-cyclo-7,8-dihydroguanosine 5'-triphosphate to cyclic pyranopterin monophosphate (cPMP). This chain is Cyclic pyranopterin monophosphate synthase, found in Burkholderia multivorans (strain ATCC 17616 / 249).